We begin with the raw amino-acid sequence, 280 residues long: Formyltetrahydrofolate deformylase (280 aa).

The ACT domain occupies Val8–Arg86. Asp225 is an active-site residue.

Belongs to the PurU family.

The enzyme catalyses (6R)-10-formyltetrahydrofolate + H2O = (6S)-5,6,7,8-tetrahydrofolate + formate + H(+). It participates in purine metabolism; IMP biosynthesis via de novo pathway; formate from 10-formyl-5,6,7,8-tetrahydrofolate: step 1/1. Catalyzes the hydrolysis of 10-formyltetrahydrofolate (formyl-FH4) to formate and tetrahydrofolate (FH4). The chain is Formyltetrahydrofolate deformylase from Escherichia coli O6:H1 (strain CFT073 / ATCC 700928 / UPEC).